Here is a 571-residue protein sequence, read N- to C-terminus: Probable serine/threonine-protein kinase WNK4 (571 aa).

A Protein kinase domain is found at 19 to 277 (GRFAEILGRG…AKELLQDPFL (259 aa)). Residues 99 to 102 (TELF) and Lys149 contribute to the ATP site. Asp166 (proton acceptor) is an active-site residue. The disordered stretch occupies residues 396–425 (EDDETPHDHHRHRTDSFHSSSSHASSSQAS). A compositionally biased stretch (low complexity) spans 412-425 (FHSSSSHASSSQAS). A Phosphoserine modification is found at Ser522.

This sequence belongs to the protein kinase superfamily. Ser/Thr protein kinase family. WNK subfamily.

It catalyses the reaction L-seryl-[protein] + ATP = O-phospho-L-seryl-[protein] + ADP + H(+). The catalysed reaction is L-threonyl-[protein] + ATP = O-phospho-L-threonyl-[protein] + ADP + H(+). Its function is as follows. May regulate flowering time by modulating the photoperiod pathway. In Arabidopsis thaliana (Mouse-ear cress), this protein is Probable serine/threonine-protein kinase WNK4 (WNK4).